A 304-amino-acid polypeptide reads, in one-letter code: Tetrahydromethanopterin S-methyltransferase subunit E (304 aa).

6 helical membrane-spanning segments follow: residues 3-23, 86-106, 131-151, 152-172, 233-253, and 263-283; these read PLIG…AGAS, PLFA…TFAV, HTPV…VVSY, LMTV…IWGI, PVTG…TTVF, and WISV…NWKI.

The protein belongs to the MtrE family. The complex is composed of 8 subunits; MtrA, MtrB, MtrC, MtrD, MtrE, MtrF, MtrG and MtrH.

Its subcellular location is the cell membrane. The catalysed reaction is 5-methyl-5,6,7,8-tetrahydromethanopterin + coenzyme M + 2 Na(+)(in) = 5,6,7,8-tetrahydromethanopterin + methyl-coenzyme M + 2 Na(+)(out). Its pathway is one-carbon metabolism; methanogenesis from CO(2); methyl-coenzyme M from 5,10-methylene-5,6,7,8-tetrahydromethanopterin: step 2/2. Functionally, part of a complex that catalyzes the formation of methyl-coenzyme M and tetrahydromethanopterin from coenzyme M and methyl-tetrahydromethanopterin. This is an energy-conserving, sodium-ion translocating step. This Methanosarcina acetivorans (strain ATCC 35395 / DSM 2834 / JCM 12185 / C2A) protein is Tetrahydromethanopterin S-methyltransferase subunit E.